A 461-amino-acid chain; its full sequence is D-phenylhydantoinase (461 aa).

3 residues coordinate a divalent metal cation: His-59, His-61, and Lys-151. Lys-151 is modified (N6-carboxylysine). Tyr-156 is a binding site for substrate. The a divalent metal cation site is built by His-182 and His-239. Ser-286 contributes to the substrate binding site. A divalent metal cation is bound at residue Asp-313. A substrate-binding site is contributed by Asn-335.

Belongs to the metallo-dependent hydrolases superfamily. Hydantoinase/dihydropyrimidinase family. Homotetramer. A divalent metal cation is required as a cofactor. Carboxylation allows a single lysine to coordinate two divalent metal cations.

The catalysed reaction is D-5-phenylhydantoin + H2O = N-carbamoyl-D-phenylglycine + H(+). Functionally, catalyzes the stereospecific hydrolysis of the cyclic amide bond of D-hydantoin derivatives with an aromatic side chains at the 5'-position. Has no activity on dihydropyrimidines. The physiological function is unknown. This is D-phenylhydantoinase from Escherichia coli (strain 55989 / EAEC).